The primary structure comprises 826 residues: Ribonucleases P/MRP protein subunit POP1 (826 aa).

Disordered stretches follow at residues 1–24 and 49–91; these read MATT…PRKI and NKDF…SGGD. The short motif at 58-65 is the Nuclear localization signal element; the sequence is KRRRTNSY. Residues 70–79 are compositionally biased toward basic residues; the sequence is AKKRNIKRQK.

Component of nuclear RNase P and RNase MRP ribonucleoproteins. RNase P consists of a catalytic RNA moiety and different protein chains. Several subunits of RNase P are also part of the RNase MRP complex. RNase MRP consists of a catalytic RNA moiety and several protein subunits.

Its subcellular location is the nucleus. It is found in the nucleolus. Its function is as follows. Component of ribonuclease P, a ribonucleoprotein complex that generates mature tRNA molecules by cleaving their 5'-ends. Also a component of the MRP ribonuclease complex, which cleaves pre-rRNA sequences. Required for rRNA maturation, including 5.8S rRNA processing. This Arabidopsis thaliana (Mouse-ear cress) protein is Ribonucleases P/MRP protein subunit POP1.